Consider the following 232-residue polypeptide: Large ribosomal subunit protein uL1 (232 aa).

The protein belongs to the universal ribosomal protein uL1 family. In terms of assembly, part of the 50S ribosomal subunit.

Its function is as follows. Binds directly to 23S rRNA. The L1 stalk is quite mobile in the ribosome, and is involved in E site tRNA release. Protein L1 is also a translational repressor protein, it controls the translation of the L11 operon by binding to its mRNA. This is Large ribosomal subunit protein uL1 from Burkholderia cenocepacia (strain HI2424).